We begin with the raw amino-acid sequence, 407 residues long: 8-amino-7-oxononanoate synthase (407 aa).

Residue Arg-24 coordinates substrate. 111–112 provides a ligand contact to pyridoxal 5'-phosphate; the sequence is GF. Residue His-137 participates in substrate binding. Pyridoxal 5'-phosphate-binding residues include Ser-183, His-211, and Thr-239. Lys-242 carries the N6-(pyridoxal phosphate)lysine modification. Position 356 (Thr-356) interacts with substrate.

This sequence belongs to the class-II pyridoxal-phosphate-dependent aminotransferase family. BioF subfamily. As to quaternary structure, homodimer. Requires pyridoxal 5'-phosphate as cofactor.

It carries out the reaction 6-carboxyhexanoyl-[ACP] + L-alanine + H(+) = (8S)-8-amino-7-oxononanoate + holo-[ACP] + CO2. Its pathway is cofactor biosynthesis; biotin biosynthesis. Functionally, catalyzes the decarboxylative condensation of pimeloyl-[acyl-carrier protein] and L-alanine to produce 8-amino-7-oxononanoate (AON), [acyl-carrier protein], and carbon dioxide. The sequence is that of 8-amino-7-oxononanoate synthase from Stenotrophomonas maltophilia (strain R551-3).